Reading from the N-terminus, the 286-residue chain is ATP synthase gamma chain (286 aa).

This sequence belongs to the ATPase gamma chain family. As to quaternary structure, F-type ATPases have 2 components, CF(1) - the catalytic core - and CF(0) - the membrane proton channel. CF(1) has five subunits: alpha(3), beta(3), gamma(1), delta(1), epsilon(1). CF(0) has three main subunits: a, b and c.

The protein localises to the cell inner membrane. Produces ATP from ADP in the presence of a proton gradient across the membrane. The gamma chain is believed to be important in regulating ATPase activity and the flow of protons through the CF(0) complex. The polypeptide is ATP synthase gamma chain (Shewanella amazonensis (strain ATCC BAA-1098 / SB2B)).